A 325-amino-acid chain; its full sequence is Zinc-type alcohol dehydrogenase-like protein C337.11 (325 aa).

It belongs to the zinc-containing alcohol dehydrogenase family. Quinone oxidoreductase subfamily.

It is found in the cytoplasm. It localises to the nucleus. This is Zinc-type alcohol dehydrogenase-like protein C337.11 from Schizosaccharomyces pombe (strain 972 / ATCC 24843) (Fission yeast).